Reading from the N-terminus, the 71-residue chain is MVPPVQVSPLIKFGRYSALILGMAYGAKRYSYLKPRAEEERRIAAEEKKRLDELKRIERELAEAEDVSIFK.

N6-acetyllysine is present on Lys34. The residue at position 68 (Ser68) is a Phosphoserine.

Belongs to the ATPase e subunit family. As to quaternary structure, component of the ATP synthase complex composed at least of ATP5F1A/subunit alpha, ATP5F1B/subunit beta, ATP5MC1/subunit c (homooctomer), MT-ATP6/subunit a, MT-ATP8/subunit 8, ATP5ME/subunit e, ATP5MF/subunit f, ATP5MG/subunit g, ATP5MK/subunit k, ATP5MJ/subunit j, ATP5F1C/subunit gamma, ATP5F1D/subunit delta, ATP5F1E/subunit epsilon, ATP5PF/subunit F6, ATP5PB/subunit b, ATP5PD/subunit d, ATP5PO/subunit OSCP. ATP synthase complex consists of a soluble F(1) head domain (subunits alpha(3) and beta(3)) - the catalytic core - and a membrane F(0) domain - the membrane proton channel (subunits c, a, 8, e, f, g, k and j). These two domains are linked by a central stalk (subunits gamma, delta, and epsilon) rotating inside the F1 region and a stationary peripheral stalk (subunits F6, b, d, and OSCP).

It is found in the mitochondrion. Its subcellular location is the mitochondrion inner membrane. In terms of biological role, subunit e, of the mitochondrial membrane ATP synthase complex (F(1)F(0) ATP synthase or Complex V) that produces ATP from ADP in the presence of a proton gradient across the membrane which is generated by electron transport complexes of the respiratory chain. ATP synthase complex consist of a soluble F(1) head domain - the catalytic core - and a membrane F(1) domain - the membrane proton channel. These two domains are linked by a central stalk rotating inside the F(1) region and a stationary peripheral stalk. During catalysis, ATP synthesis in the catalytic domain of F(1) is coupled via a rotary mechanism of the central stalk subunits to proton translocation. In vivo, can only synthesize ATP although its ATP hydrolase activity can be activated artificially in vitro. Part of the complex F(0) domain. The polypeptide is ATP synthase F(0) complex subunit e, mitochondrial (Rattus norvegicus (Rat)).